A 140-amino-acid chain; its full sequence is Putative nickel-responsive regulator 3 (140 aa).

Ni(2+) contacts are provided by His-81, His-92, His-94, and Cys-100.

The protein belongs to the transcriptional regulatory CopG/NikR family. Requires Ni(2+) as cofactor.

Its function is as follows. Transcriptional regulator. This is Putative nickel-responsive regulator 3 from Methanosarcina mazei (strain ATCC BAA-159 / DSM 3647 / Goe1 / Go1 / JCM 11833 / OCM 88) (Methanosarcina frisia).